Reading from the N-terminus, the 227-residue chain is Ribonuclease 3 (227 aa).

Residues 3–130 (TNAISKIIKY…LIGAIYLDGG (128 aa)) form the RNase III domain. Mg(2+) is bound at residue Glu-43. Asp-47 is a catalytic residue. Residues Asn-116 and Glu-119 each coordinate Mg(2+). Residue Glu-119 is part of the active site. In terms of domain architecture, DRBM spans 155–224 (DAKTILQEWA…ASLMLAKINY (70 aa)).

Belongs to the ribonuclease III family. In terms of assembly, homodimer. The cofactor is Mg(2+).

Its subcellular location is the cytoplasm. The enzyme catalyses Endonucleolytic cleavage to 5'-phosphomonoester.. Functionally, digests double-stranded RNA. Involved in the processing of primary rRNA transcript to yield the immediate precursors to the large and small rRNAs (23S and 16S). Processes some mRNAs, and tRNAs when they are encoded in the rRNA operon. Processes pre-crRNA and tracrRNA of type II CRISPR loci if present in the organism. The sequence is that of Ribonuclease 3 from Ehrlichia ruminantium (strain Gardel).